The sequence spans 38 residues: Photosystem II reaction center protein L (38 aa).

A helical membrane pass occupies residues 17-37; sequence SLYFGLLLIFVLAVLFSSYIF.

This sequence belongs to the PsbL family. PSII is composed of 1 copy each of membrane proteins PsbA, PsbB, PsbC, PsbD, PsbE, PsbF, PsbH, PsbI, PsbJ, PsbK, PsbL, PsbM, PsbT, PsbX, PsbY, PsbZ, Psb30/Ycf12, at least 3 peripheral proteins of the oxygen-evolving complex and a large number of cofactors. It forms dimeric complexes.

It localises to the plastid. The protein localises to the chloroplast thylakoid membrane. One of the components of the core complex of photosystem II (PSII). PSII is a light-driven water:plastoquinone oxidoreductase that uses light energy to abstract electrons from H(2)O, generating O(2) and a proton gradient subsequently used for ATP formation. It consists of a core antenna complex that captures photons, and an electron transfer chain that converts photonic excitation into a charge separation. This subunit is found at the monomer-monomer interface and is required for correct PSII assembly and/or dimerization. The protein is Photosystem II reaction center protein L of Chlamydomonas moewusii (Chlamydomonas eugametos).